The primary structure comprises 985 residues: SWI/SNF complex subunit SWI3D (985 aa).

The interval 1-55 (MEEKRRDSAGTLAFAGSSGDSPASEPMPAPRRRGGGLKRKANALGGSNFFSSAPS) is disordered. Residues 30–41 (PRRRGGGLKRKA) are compositionally biased toward basic residues. Residues 108–133 (EKPKEEEERNKAIREWEALEAKIEAD) are a coiled coil. The region spanning 145–242 (HVVPNHCGWF…FHPFPPTDTG (98 aa)) is the SWIRM domain. The ZZ-type; degenerate zinc-finger motif lies at 305–359 (AVEYHCNSCSADCSRKRYHCPKQADFDLCTECFNSGKFSSDMSSSDFILMEPAEA). Residues cysteine 310, cysteine 313, cysteine 333, and cysteine 336 each contribute to the Zn(2+) site. An SANT domain is found at 362 to 413 (VGSGKWTDQETLLLLEALEIFKENWNEIAEHVATKTKAQCMLHFLQMPIEDA). Basic and acidic residues-rich tracts occupy residues 428–464 (TTDLAVSKDDNSVLKDAPEEAENKKRVDEDETMKEVP), 493–502 (AEQKTPKLET), and 615–661 (DNSH…EKQP). Disordered regions lie at residues 428–502 (TTDL…KLET) and 591–814 (EDPP…EGKK). Residues 662–671 (GSRTENSTTK) are compositionally biased toward polar residues. A compositionally biased stretch (basic and acidic residues) spans 703-724 (CSGKELQEPLKDGNKLSSENKD). Residues 725–736 (ASQSTVSQSAAD) are compositionally biased toward polar residues. Residues 742–776 (ASRDVEMKDTLQSEKDPEDVVKTVGEKVQLAKEEG) are compositionally biased toward basic and acidic residues. A compositionally biased stretch (polar residues) spans 780 to 800 (VLSTPDKSVSQQPIGSASAPE). The stretch at 839–900 (ISAAAVKAKN…EQLERSRQRL (62 aa)) forms a coiled coil. The segment at 944–985 (MAFPRPPMPRPPGFPVPGSFVAATTMTGSSDPSPGSDNVSSV) is disordered. A compositionally biased stretch (pro residues) spans 947–958 (PRPPMPRPPGFP). Polar residues predominate over residues 965-985 (AATTMTGSSDPSPGSDNVSSV).

In terms of assembly, interacts with SWI3B, but not with BSH. Component of a RNA-directed DNA methylation (RdDM) complex that contains at least MORC6, MORC1/CRT1, MORC2, SWI3D and SUVH9. Interacts with MORC6 and SUVH9. In terms of tissue distribution, ubiquitously expressed.

The protein resides in the nucleus. Component of a multiprotein complex equivalent of the SWI/SNF complex, an ATP-dependent chromatin-remodeling complex, which is required for the positive and negative regulation of gene expression of a large number of genes. It changes chromatin structure by altering DNA-histone contacts within a nucleosome, leading eventually to a change in nucleosome position, thus facilitating or repressing binding of gene-specific transcription factors. This is SWI/SNF complex subunit SWI3D (SWI3D) from Arabidopsis thaliana (Mouse-ear cress).